The chain runs to 377 residues: Nitric oxide reductase FlRd-NAD(+) reductase (377 aa).

Belongs to the FAD-dependent oxidoreductase family. Requires FAD as cofactor.

It localises to the cytoplasm. It catalyses the reaction 2 reduced [nitric oxide reductase rubredoxin domain] + NAD(+) + H(+) = 2 oxidized [nitric oxide reductase rubredoxin domain] + NADH. Its pathway is nitrogen metabolism; nitric oxide reduction. In terms of biological role, one of at least two accessory proteins for anaerobic nitric oxide (NO) reductase. Reduces the rubredoxin moiety of NO reductase. In Salmonella typhi, this protein is Nitric oxide reductase FlRd-NAD(+) reductase.